The sequence spans 39 residues: Photosystem II reaction center protein L (39 aa).

The chain crosses the membrane as a helical span at residues 18–38; that stretch reads SLYLGLLLIAVLGILFSSYFF.

This sequence belongs to the PsbL family. In terms of assembly, PSII is composed of 1 copy each of membrane proteins PsbA, PsbB, PsbC, PsbD, PsbE, PsbF, PsbH, PsbI, PsbJ, PsbK, PsbL, PsbM, PsbT, PsbX, PsbY, PsbZ, Psb30/Ycf12, peripheral proteins PsbO, CyanoQ (PsbQ), PsbU, PsbV and a large number of cofactors. It forms dimeric complexes.

The protein localises to the cellular thylakoid membrane. Functionally, one of the components of the core complex of photosystem II (PSII). PSII is a light-driven water:plastoquinone oxidoreductase that uses light energy to abstract electrons from H(2)O, generating O(2) and a proton gradient subsequently used for ATP formation. It consists of a core antenna complex that captures photons, and an electron transfer chain that converts photonic excitation into a charge separation. This subunit is found at the monomer-monomer interface and is required for correct PSII assembly and/or dimerization. The protein is Photosystem II reaction center protein L of Crocosphaera subtropica (strain ATCC 51142 / BH68) (Cyanothece sp. (strain ATCC 51142)).